The chain runs to 320 residues: Small ribosomal subunit protein uS2 (320 aa).

The tract at residues 254 to 320 is disordered; it reads GDAAKAALPV…APATTGPVSE (67 aa). Over residues 272–282 the composition is skewed to basic and acidic residues; it reads VSAKNEAKSDD. Residues 308–320 are compositionally biased toward low complexity; sequence AEAAPATTGPVSE.

Belongs to the universal ribosomal protein uS2 family.

This chain is Small ribosomal subunit protein uS2, found in Clavibacter sepedonicus (Clavibacter michiganensis subsp. sepedonicus).